The following is a 3332-amino-acid chain: MLSPAVCYHTDEGKNGYTFPNLETPKNGVVQTPVQYLIQTAPLHDFCSHQMVDLRTLLQCAWSRVIAQLDSTTDLKADAIYGTKSKSLLEGFISEVKKSQQSTQLENERILTEKLLLPLNPRGTSSLSWLQNDLLCATGGEYGEQSTGGFELAQCGSWIAISASFNPLIVSSRWVNDYIEVFRSFLVALVVGDDELSAPENYLTPEDCARIRNWNSAVPPEINASILDVFSEQVKAHPGSTAVSGWDASLTYQELEDCADQLAYQLQSRGVGPGMLIPLCFEKSAWTVVAIIAVISTGAAFVLLDASQPEARLRSIVMQTRATLMITSSQKKDLGRRLVPEVVSVQPTKSTKNSERSRALRPVIKPDSLLYVVFTSGSTGQPKGAMISHSNFVSAVHYRRSELYNVTPRVLDFASYSFDISIESTLAPLLLGGCVCVPSDASREADPSDAIKAFNVNQVMLTPSVARLVEPENVPSLRLLHLGGEQISRFDIERWPSTVKLINGYGPAECTVVSTANTVSPSSPEAHTIGRGLGAVTWVVDPADTGRLVPVGAVGELVIEGPLVGSGYLHDEGRTLAAFIVDPPWLRAFGRRGRLYRTGDLVSYNSNGTLTFIGRKDTQVKVNGQRVELGEIEHNLQQEIYNQGNCVVDVVVDLISVNSNSGKQSILLAFLGLERAAQERFAASGTPSVQELTSAMWEILEPINLFKVLPRYMVPSIYIPLWRMPLLPSGKINRLKLRSMGESLSVDDLAAFRKPQVATVDTQGRITPQEKLLQSLWGQIFPHCAGSIQPDDNFFSLGGDSLTAMKLVGLIRKHGIENKHSETIRIADILQWPRLADMARCITRVDDKQGDVQDALFDLLPDHIAPSNARQIAAPQCDVQPEQIVDIYPCTPLQEGLMALSAERSGAYIAQNIFELSDRTNIDTLRMAWTHIVMSSVIFRTRIVQLDSQTLAQAVVTVPIEWECYDGKLNDFVAIDRHRPMGIGKALMRLTVVTERSEESLLKCFLVWTAHHAVFDDWILNLITSLVGKMYHGRPPSSFHLTPYKRFIRHLQELNRESFSNYWRQELEGTNAAIFPHLPSAVDKPVADATANFAFSLNDSKLNVHASLPTILRAAWSILVSRHTQTDDVIFGETLTGRNAPVAGVEEMDGPTLTTIPRRVKVQNEMRVAEFLEEIRRHEINSIPYEGFGLQNIQKLSDDARTACQFATLLVIQRDPEVSFDSPMINVTEKVLHEDCGEDGKPYASFFTTYPLMVTISIKDNQINIYASFDSRIIERSQMQVLMHQLEVITRQVIQEPHEVVGGINCLTRKELHQIWSWNRLPWVPVSGSVHDSIAEVSNTRPTAPAVCAWDGSLTYGELDNLSTRLGSYLFKVGVEAESLVPLCFEKSVWTIVSMLAVIKAGGAFVLLDPTQPKQRLGEIIVRAKANYVLTSPLQYGMVSDLASEFNLTIVLVSKSPLDALTDDATVTDRMPQHLDSDRPLFVTFTSGSTGKPKGVISTHGSYLSGVNYRRSILQLPNLDMRVFDFASYSFDVSTDVILSTLLTGGCVCVPSDFDRKNNIPGAINALRVNAADLTPSVSRLLSPESVPGLKVLKLGGEANTAADHALWLGKTTLVNIYGPSECLVVTAKTVLPGIDPCNIGRGLGANTWVADPTNHDRLAPIGSIGELLVEGPILGRGYLDDQKQTDAVFIHNPTWLVKGLPGFQPGREGRVYKTGDLVRYNPDGTLHYIGRKDRQLKVRGQRVEPAEIEGAIKRHMQSKLGMTIDVVADLVTSNRDQRKRLIAFLGLNQVLESRGYSEKDHLGDTVLRDIMWEVTAGLEVLLSQTLPPYMVPSVYVPLRHIPLLPSGKTDRRKLQSAAASLSPEDLSFFRERPKAQNRAIATPKEEKLQKIWADALGVKSIQAEDNFFTIGGDSIAAMRLVGLARDQGLLLSVADIFQRPRLYEMAEKAAETGTELLDIPAFSLLPGANPYVIDEREVAAAQCGCSIELIEDIYPCTPLQEGLMALSTKTPGAYISQNVFQMGNATNTDLMKEAWDYVVRSNPIMRTRVILSARQDLVQVTVQEGIHWASHDSLDCYLKYDRNTSMGLGMPLTRLAWVDDEMTKRSFLVWTAHHAIFDGWVLSLVMENVIRVYHGKSLHVGPPFKAFIKYLKELERAQMDTFWQDEFSGITATPFPALPSSTYQPKADVETKLEMSFTWSTTSNVTSSTFLRLAWAVLVARLTASSDVIFGETLNGRNAPIPGIERMIGPTLTTLPRRIVLEDGLPVADLLHRLKDHEIAMMPFEHVGLQHLQELSADCQAACKFQTLFVVQRGMDHDMSEMSLTISGDVSNFNSYALMLTCAPESDKILFHASHDSNVISPEKMQDVLNQLQNVVMQLSKKMDRPLREINCLSEIDTQQIWKWNHQLPESISIPVHEIIAQQAREHPATEAVCAWDGTFTYRELDTLAGQLAYHLKELGAVSTPGYHIPLCFEKSAWTVISILAVMKAGGSFVLLDVSQPQDRLQHIVSHIKANYILSSPRQSDLASSLAANVVVVSSDFVRSLRQLHTPGPLNPNSALYVVFTSGSTGKPKGVIITHLNFASGVHYRQNVMHMPGFRLLDFPSYSFDASVESNLVPLMIGGCVCIASDELCQNNLSAAISSTNANAVMLTPSSATLISPENAHSLKQLHLGGEKLTAANIETWADKLKLVVGYGPAECAVTTTGRIVKGMVPQKENIGPAFGAVTWLVDPASHDRLVPLGTIGELLIEGPIVGQGYVNDPERTAAAFIENPPWLLAGGGMFAGRQGRLYKTGDLARYDSDGTLIFIGRKDTQVKIRGQRVELQEIEHHVYQYLRDLTGLGLSIVADLISTCSDIANPTLVVFIELEAVMTQKGYLPDPGPAVLYNEMKSMVPGLDEALRNALPRYMIPSAYVPRWKLPMMPSGKLNRKQLRSDAESLTAEQWNHFRSLISAVSPAARGREVATNDEAAVQRLWADILRIAEKQIKADDSFFTLGGNSITAMKLVELARRRGILFNVADVFAHPVLSDLASRIGRVETTPLNQDDLAYAPLQRLMSSNPTLIQGQSSNIPLVMIHDGGGTTYAYHRMGPVNRPLYGIHFPGYASGTAWKGGIKSLGRHYADLIQKSLLSGPIILGGWSSGGLISLEVALCLKSGPFEVKGVIMVDSVFPAPSLVDETFLAPSSSETNDTAMAADGTLAKMNMFQFNSMLKEYSPPRFEDLFQDLDASKAGLCHEQRSNVNPITEDTHHAERFPVHLLRASSTKASIGELDENMKSFLDATLGWEHYRPRLVSEVDLIDAEHYSLFSANTVAETTRHIRDFCDRITKSRKV.

Positions 230 to 622 are adenylation 1; that stretch reads FSEQVKAHPG…IGRKDTQVKV (393 aa). In terms of domain architecture, Carrier 1 spans 764-846; sequence GRITPQEKLL…DMARCITRVD (83 aa). Position 801 is an O-(pantetheine 4'-phosphoryl)serine (serine 801). The condensation 1 stretch occupies residues 886–1314; that stretch reads DIYPCTPLQE…NCLTRKELHQ (429 aa). The adenylation 2 stretch occupies residues 1336-1740; the sequence is EVSNTRPTAP…GRKDRQLKVR (405 aa). In terms of domain architecture, Carrier 2 spans 1880–1954; it reads AIATPKEEKL…EMAEKAAETG (75 aa). Serine 1915 carries the O-(pantetheine 4'-phosphoryl)serine modification. A condensation 2 region spans residues 1992 to 2402; that stretch reads EDIYPCTPLQ…CLSEIDTQQI (411 aa). An adenylation 3 region spans residues 2422-2819; it reads AQQAREHPAT…GRKDTQVKIR (398 aa). A Carrier 3 domain is found at 2963-3039; the sequence is EVATNDEAAV…DLASRIGRVE (77 aa). Serine 3000 is modified (O-(pantetheine 4'-phosphoryl)serine). The thioesterase (TE) domain stretch occupies residues 3058-3323; that stretch reads SSNPTLIQGQ…ETTRHIRDFC (266 aa).

It belongs to the NRP synthetase family.

The protein operates within secondary metabolite biosynthesis. Its function is as follows. Nonribosomal peptide synthetase; part of the gene cluster that mediates the biosynthesis of imizoquins A to D, tripeptide-derived alkaloids that serve a protective role against oxidative stress that are essential for normal germination. ImqB is a canonical three-module NRPS that assembles the tripeptide backbone of the imizoquins via condensation of Trp, Tyr, and Leu-derived precursors. N-methylation by imqF and phenol oxidation by imqC, followed by cyclization via the FAD-dependent oxidase imqH carry out the three-step transformation of L-tyrosine into tetrahydroisoquinoline. Importantly, this sequence requires the presence of a free amine in the tyrosine moiety, indicating that isoquinoline formation occurs prior to peptide bond formation. The imidazolidin-4-one ring of imizoquins could form following additional oxidation of the methyl-derived bridgehead carbon by imqH. Lastly, O-methylation by imqG and leucine hydroxylation by imqE complete biosynthesis of the imizoquins. The chain is Nonribosomal peptide synthetase imqB from Aspergillus flavus (strain ATCC 200026 / FGSC A1120 / IAM 13836 / NRRL 3357 / JCM 12722 / SRRC 167).